A 948-amino-acid chain; its full sequence is Receptor-like protein 45 (948 aa).

The N-terminal stretch at 1–26 is a signal peptide; the sequence is MSSSKLMDFGLTWIIMMMILLQGCRS. At 27 to 897 the chain is on the extracellular side; sequence CIESERQGLL…EDDDESGLLD (871 aa). 2 N-linked (GlcNAc...) asparagine glycosylation sites follow: N99 and N113. 2 LRR repeats span residues 106–129 and 135–162; these read FEELQSLNLSSGYFKGWFDERKGG and LRNLETLDLGVNFYDTSVLPYLNEAVSL. An LRR 3; degenerate repeat occupies 163–183; it reads KTLILHDNLFKGGFPVQELIN. N183 carries an N-linked (GlcNAc...) asparagine glycan. LRR repeat units follow at residues 184–208, 210–233, 234–257, 258–284, 286–306, 307–332, 334–357, 358–381, 382–404, 405–429, 430–453, 454–477, 479–502, 503–526, 527–549, 550–573, 575–595, 596–618, 619–640, 642–665, 666–689, 758–782, 783–805, 807–831, and 833–855; these read LTSLEVLDLKFNKFSGQLPTQELTN, RNLRALDLSNNKFSGSLQKQGICR, LEQLQELRLSRNRFEGEIPLCFSR, FSKLRVLDLSSNHLSGKIPYFISDFKS, EYLSLLDNDFEGLFSLGLITE, LTELKVFKLSSRSGMLQIVETNVSGG, QSQLSSIMLSHCNLGKIPGFLWYQ, QELRVIDLSNNILSGVFPTWLLEN, NTELQALLLQNNSFKTLTLPRTM, RRLQILDLSVNNFNNQLPKDVGLIL, ASLRHLNLSNNEFLGNMPSSMARM, ENIEFMDLSYNNFSGKLPRNLFTG, YSLSWLKLSHNRFSGPIIRKSSDE, TSLITLIMDNNMFTGKIPRTLLNL, RMLSVIDLSNNLLTGTIPRWLGN, FFLEVLRISNNRLQGAIPPSLFNI, YLWLLDLSGNFLSGSLPLRSS, SDYGYILDLHNNNLTGSIPDTLW, YGLRLLDLRNNKLSGNIPLFRS, PSISVVLLRENNLTGKIPVELCGL, SNVRMLDFAHNRLNESIPSCVTNL, LNQMFGLDLSSNELSGNIPEELGDL, KRVRSLNLSRNSLSGSIPGSFSN, RSIESLDLSFNKLHGTIPSQLTLLQ, and LVVFNVSYNNLSGVIPQGKQFNT. An N-linked (GlcNAc...) asparagine glycan is attached at N328. N-linked (GlcNAc...) asparagine glycosylation is found at N381 and N392. N-linked (GlcNAc...) asparagine glycans are attached at residues N436 and N465. The N-linked (GlcNAc...) asparagine glycan is linked to N608. Residues N653, N679, and N688 are each glycosylated (N-linked (GlcNAc...) asparagine). Residue N789 is glycosylated (N-linked (GlcNAc...) asparagine). Residues N837 and N842 are each glycosylated (N-linked (GlcNAc...) asparagine). Residues 898–918 traverse the membrane as a helical segment; the sequence is IVVLWWSLGTTYVTVMMGFLV. Over 919–948 the chain is Cytoplasmic; that stretch reads FLCFDSPWRRAWFCLVDTFIDRVKDVLGVI.

This sequence belongs to the RLP family.

It is found in the cell membrane. The chain is Receptor-like protein 45 from Arabidopsis thaliana (Mouse-ear cress).